A 487-amino-acid polypeptide reads, in one-letter code: Cell wall protein TIR4 (487 aa).

A signal peptide spans 1–22; sequence MAYSKITLLAALAAIAYAQTQA. A run of 11 repeats spans residues 137-148, 149-160, 161-172, 173-184, 185-196, 197-208, 209-220, 221-232, 233-244, 245-256, and 257-268. An 11 X 12 AA approximate tandem repeats, Ser-rich region spans residues 137–268; the sequence is SSSVAPSSSE…SVASSTSEAT (132 aa). Residues 206–299 form a disordered region; sequence EVASSSVAPS…SVSSSSAVSS (94 aa). 5 N-linked (GlcNAc...) asparagine glycosylation sites follow: asparagine 327, asparagine 348, asparagine 368, asparagine 403, and asparagine 404. Asparagine 465 carries GPI-anchor amidated asparagine lipidation. The propeptide at 466–487 is removed in mature form; the sequence is GAAKAVIGMGAGALAAVAAMLL.

The protein belongs to the SRP1/TIP1 family. The GPI-anchor is attached to the protein in the endoplasmic reticulum and serves to target the protein to the cell surface. There, the glucosamine-inositol phospholipid moiety is cleaved off and the GPI-modified mannoprotein is covalently attached via its lipidless GPI glycan remnant to the 1,6-beta-glucan of the outer cell wall layer.

The protein localises to the secreted. It is found in the cell wall. The protein resides in the membrane. Functionally, component of the cell wall. Required for anaerobic growth. The polypeptide is Cell wall protein TIR4 (TIR4) (Saccharomyces cerevisiae (strain ATCC 204508 / S288c) (Baker's yeast)).